Here is a 338-residue protein sequence, read N- to C-terminus: Nucleoid-associated protein VSAL_I1059 (338 aa).

The segment at 319–338 (KGTPPNLKDQLTRRLGSSES) is disordered.

It belongs to the YejK family.

It localises to the cytoplasm. Its subcellular location is the nucleoid. The sequence is that of Nucleoid-associated protein VSAL_I1059 from Aliivibrio salmonicida (strain LFI1238) (Vibrio salmonicida (strain LFI1238)).